A 243-amino-acid polypeptide reads, in one-letter code: ATP-dependent dethiobiotin synthetase BioD (243 aa).

ATP is bound at residue 12–17 (DVGKTL). Residue Thr-16 coordinates Mg(2+). Residue Lys-37 is part of the active site. Ser-41 contacts substrate. ATP contacts are provided by residues Asp-54, 115–118 (EGCG), and 179–180 (NM). 2 residues coordinate Mg(2+): Asp-54 and Glu-115.

It belongs to the dethiobiotin synthetase family. In terms of assembly, homodimer. It depends on Mg(2+) as a cofactor.

It localises to the cytoplasm. The catalysed reaction is (7R,8S)-7,8-diammoniononanoate + CO2 + ATP = (4R,5S)-dethiobiotin + ADP + phosphate + 3 H(+). It functions in the pathway cofactor biosynthesis; biotin biosynthesis; biotin from 7,8-diaminononanoate: step 1/2. In terms of biological role, catalyzes a mechanistically unusual reaction, the ATP-dependent insertion of CO2 between the N7 and N8 nitrogen atoms of 7,8-diaminopelargonic acid (DAPA, also called 7,8-diammoniononanoate) to form a ureido ring. This is ATP-dependent dethiobiotin synthetase BioD from Caldicellulosiruptor saccharolyticus (strain ATCC 43494 / DSM 8903 / Tp8T 6331).